A 468-amino-acid chain; its full sequence is 6-phospho-beta-galactosidase (468 aa).

D-galactose 6-phosphate-binding residues include Q19, H116, N159, E160, and N297. Residue E160 is the Proton donor of the active site. E375 acts as the Nucleophile in catalysis. Positions 428, 429, 435, and 437 each coordinate D-galactose 6-phosphate.

The protein belongs to the glycosyl hydrolase 1 family.

The enzyme catalyses a 6-phospho-beta-D-galactoside + H2O = D-galactose 6-phosphate + an alcohol. It functions in the pathway carbohydrate metabolism; lactose degradation; D-galactose 6-phosphate and beta-D-glucose from lactose 6-phosphate: step 1/1. This Streptococcus pyogenes serotype M28 (strain MGAS6180) protein is 6-phospho-beta-galactosidase.